The primary structure comprises 212 residues: Response regulator SsrB (212 aa).

The segment at M1–A138 is required for prevention of DNA binding in absence of phosphorylation and for full stimulation of activity by acidic pH. A Response regulatory domain is found at K5–A121. Residue D56 is modified to 4-aspartylphosphate. Positions D143–R208 constitute an HTH luxR-type domain. Residues N167–M186 constitute a DNA-binding region (H-T-H motif). C203 carries the post-translational modification S-nitrosocysteine.

Homodimer; disulfide-linked; dimerizes upon DNA-binding. SsrB phosphorylated on Asp-56 activates the expression of virulence genes whereas the unphosphorylated form controls biofilm formation. Independently of SsrA, can be phosphorylated by small inorganic phosphate donors (such as acetyl phosphate or phosphoramidate). In terms of processing, disulfide bond formation at Cys-203 is not required for dimerization. Post-translationally, cys-203 may serve as a redox sensor that is nitrosylated in presence of reactive nitrogen species (RNS) generated by the host, the modification modulates its DNA-binding activity. Cys-203 is relatively resistant to oxidation by hydrogen peroxide.

It is found in the cytoplasm. Member of the two-component regulatory system SsrA/SsrB (SpiR/SsrB) that is required for intracellular proliferation and systemic dissemination within the host. When inside acidic Salmonella-containing vesicles (SCV) within host cells the SsrA sensor kinase autophosphorylates and the phosphoryl group is transferred to the response regulator SsrB; phosphorylated SsrB activates the expression of genes encoding virulence proteins, including pathogenicity island 2 (SPI2) and other horizontally acquired genes, but also ancestral genes; it can stimulate gene expression both by recruiting RNA polymerase and by antagonizing the action of the transcriptional repressor hns (H-NS). Can also act independently of sensor kinase ssrA to support the dormant carrier state by directing the transcription of factors required for biofilm formation. DNA-binding is stimulated by acidic pH conditions, and binding promotes bending of DNA both upstream and downstream of binding sites. Binds a degenerate 18-basepair palindromic sequence with a 7-4-7 internal organization, and regulates gene expression from 86 operons. When phosphorylated, activates the transcription of the ABC transporter complex dalSTUV, which helps protect the organism from oxidative killing by host neutrophils. Binds the phoP promoter to stimulate expression in acidic pH conditions. Antagonizes hns to activate the transcription of ugtL. Following invasion of host cells, binds the hilD and hilA regulatory regions to repress their transcription and consequently to repress transcription of pathogenicity island 1 (SPI1) encoding genes involved in host cell invasion. Binds the promoters of the flagellar master regulators flhD and flhC to repress their expression and consequently to suppress flagellar motility and promote evasion of the host inflammasome during infection of host cells. Activates expression of sseI/srfH, sifA, sifB, sseJ and regulates its own expression. When unphosphorylated, relieves the hns-mediated repression of master biofilm regulator csgD by binding and bending the csgD regulatory region. May act as early as in the lumen of the host small intestine, to activate the expression of virulence proteins prior to invasion of host cells. This Salmonella typhimurium (strain LT2 / SGSC1412 / ATCC 700720) protein is Response regulator SsrB.